The following is a 303-amino-acid chain: Elongation factor Ts (303 aa).

Residues 81–84 (TDFV) are involved in Mg(2+) ion dislocation from EF-Tu.

Belongs to the EF-Ts family.

The protein localises to the cytoplasm. Associates with the EF-Tu.GDP complex and induces the exchange of GDP to GTP. It remains bound to the aminoacyl-tRNA.EF-Tu.GTP complex up to the GTP hydrolysis stage on the ribosome. This chain is Elongation factor Ts, found in Mesomycoplasma hyopneumoniae (strain J / ATCC 25934 / NCTC 10110) (Mycoplasma hyopneumoniae).